Here is a 393-residue protein sequence, read N- to C-terminus: Chalcone synthase LF2 (393 aa).

C164 is an active-site residue.

It belongs to the thiolase-like superfamily. Chalcone/stilbene synthases family.

It catalyses the reaction (E)-4-coumaroyl-CoA + 3 malonyl-CoA + 3 H(+) = 2',4,4',6'-tetrahydroxychalcone + 3 CO2 + 4 CoA. The protein operates within secondary metabolite biosynthesis; flavonoid biosynthesis. The primary product of this enzyme is 4,2',4',6'-tetrahydroxychalcone (also termed naringenin-chalcone or chalcone) which can under specific conditions spontaneously isomerize into naringenin. The polypeptide is Chalcone synthase LF2 (CHS-LF2) (Ipomoea batatas (Sweet potato)).